The following is a 416-amino-acid chain: MSVEEKVLELIRPDDKDRERLEKVAEEVLSRLKGFDAQIQGSFRKGTWLKGDTDIDIFVFYPKEVGKEYLREKSLKELIQLFQDLNYEIAFAEHPYLILKINNVEVDVVPALKIDSGEDVITAADRTPFHTKFVTTHLDEKGKDEVRLLKQFMKGIGVYGAEIKVKGFSGYVAELLTIYYGNFRKVLESAKTWKPPIKLNLVEPKRDFDEPLQIPDPVDPKRNTASAVSLRNIAVFSLASKIFIERPSIEFFFPTEIKAEEIIGDILLIKVEFKEKSVEDIIWGQVWKNVEKLKNAIKTAGFSLIDIGAWGNSQTVKIAVQIEDKNISRYYLNQGPYFYVNGVDNFMRKNKYVWVGEDGRLYSLKKRRETNLEKIVLNNLSFKENFSVEMTWLSEINQDDKELHKFLRKRPTWMQT.

Serine 42 and lysine 45 together coordinate ATP. Residues serine 42 and lysine 45 each coordinate CTP. The Mg(2+) site is built by aspartate 54, aspartate 56, and aspartate 107. ATP contacts are provided by histidine 130, lysine 150, and tyrosine 159. Residues histidine 130, lysine 150, and tyrosine 159 each contribute to the CTP site.

It belongs to the tRNA nucleotidyltransferase/poly(A) polymerase family. Archaeal CCA-adding enzyme subfamily. As to quaternary structure, homodimer. Mg(2+) serves as cofactor.

It catalyses the reaction a tRNA precursor + 2 CTP + ATP = a tRNA with a 3' CCA end + 3 diphosphate. It carries out the reaction a tRNA with a 3' CCA end + 2 CTP + ATP = a tRNA with a 3' CCACCA end + 3 diphosphate. Functionally, catalyzes the addition and repair of the essential 3'-terminal CCA sequence in tRNAs without using a nucleic acid template. Adds these three nucleotides in the order of C, C, and A to the tRNA nucleotide-73, using CTP and ATP as substrates and producing inorganic pyrophosphate. tRNA 3'-terminal CCA addition is required both for tRNA processing and repair. Also involved in tRNA surveillance by mediating tandem CCA addition to generate a CCACCA at the 3' terminus of unstable tRNAs. While stable tRNAs receive only 3'-terminal CCA, unstable tRNAs are marked with CCACCA and rapidly degraded. The protein is CCA-adding enzyme of Sulfolobus acidocaldarius (strain ATCC 33909 / DSM 639 / JCM 8929 / NBRC 15157 / NCIMB 11770).